The following is a 1088-amino-acid chain: MDEFEKAIIYCFDPNVSEDIKQKALAYTESIKVAPEAWLFCLERLGKTQIVLVKFFCLQVFQEIILHRYETLSKTDRLNLRTGLMNWFRLYLVNNQEESAIKNKYAQVMVLLFKQEYLENWLTFFDDFLSMLSPGNSSIDIFLRICKSIDEEVVSFDVHRSPAELAQNTFIKDTMRENAITKIVASWYEILVHHQSPPLINMTLQNIKTYVGWIDISLIVNDKFIPLFCKYLGVRVVRDEVCDCFKEIINKGMDPFAKLTLIQQLEIKNIINFAQLDDQEFNIRVGALINLTGMEILRSLESIQTLQQEGFDKKFQSGEILLEEMLQLLFRFFNNESNDVSYSVYGLASLYVQKLKNIKVLNEKQIQHITLLVQIVRNKMRYKTSRIEEDDDESDIKFADFRKDLSNLFRNIFRICPEMVGSFIATNIQRIVENKNNNNKNKNTTNSKNGTINNNINKTNNNNNNNTNNINNNTNNINNNTTNNNNNNTNKNNVKNANNIKNNNNEDEEDDDDMSFSDIEVSIYLLFQMGEGISATSEETLKSFEKFFGSMVVVLSQSSISITEHQVVSLIYFETIVRYAKYIPMDEQQYLSSVLKSFLDERGIHNKDALVRSKAGYLLNKLAKYLKVQMFPYINDIIDALKNHLIISYEIQKEVPFEEQLNFYESLGFLIGGANLPIEKEALYIEKILNNPIIKMEEIIAKQLYKGDTKENQFYYTVQLTQLINVIGTFSKGFSSFNATNGQLKPDAYCTYKVYFKRSLESIIQLPSLIPSNEDIKSRTFFYMHRMVDVLGKDLKPLLVKILPILLDHATTIDILLEFLVFYNQLISKYKEELFDVINPTLCPIVDRIYKSLNTTIPPVEHSDAERALNDLKKSYFQLIQALFTHNLASTLTSTLNLPLLFQQVFNTVIGGCQASGSHSESIQKVCFVILKKMIDDYSPGGPHAVNGFQSFIYDQVVPLCFQVPLSDQFNMSDFTSTQILLEIGKSLRAIAQKYGDEFLTYMNTILLPKLNVSQEVINQFIKLLQPSSPIKDFQELLKLFIRQKKGLPIKTSNSNINLNNNNNINNNNNNINNNGHTNGNGVNKNGH.

A compositionally biased stretch (low complexity) spans 435-503 (KNNNNKNKNT…VKNANNIKNN (69 aa)). Disordered stretches follow at residues 435 to 513 (KNNN…DDDD) and 1059 to 1088 (LNNN…KNGH).

Belongs to the exportin family.

It is found in the nucleus. The protein resides in the cytoplasm. Functionally, mediates the nuclear export of aminoacylated tRNAs. This Dictyostelium discoideum (Social amoeba) protein is Exportin-T (xpot).